Here is a 128-residue protein sequence, read N- to C-terminus: Conopressin-conophysin (128 aa).

Positions 1–27 (MTRSAMQMGRLTLVLCLLLLLLLTTQA) are cleaved as a signal peptide. The cysteines at positions 28 and 33 are disulfide-linked. A Glycine amide modification is found at G36. A propeptide spanning residues 37–44 (GKRDVDER) is cleaved from the precursor. Cystine bridges form between C50/C90, C53/C64, C58/C80, C65/C70, C97/C115, C109/C127, and C116/C121.

It belongs to the vasopressin/oxytocin family. As to expression, expressed by the venom gland.

It is found in the secreted. Functionally, targets vasopressin-oxytocin related receptors. Is more active on fish receptors than on their human counterparts, supporting an evolved role of this conopressin in the envenomation process. Acts as an agonist on zebrafish vasopressin receptors V1a1R (EC(50)=10.6 nM), V1a2R (EC(50)=44.06 nM, partial agonist), V2R (EC(50)=299.2 nM) and oxytocin receptor (EC(50)=353.73 nM, partial agonist). Shows a weaker activity on human receptors AVPR1B (EC(50)=51.92 nM), AVPR1A (EC(50)=123.78 nM), AVPR2 (EC(50)=299.2 nM) and oxytocin (OXTR) receptor (EC(50)=455.66 nM, partial agonist). In vivo, exhibits grooming and scratching behavior in mice, following intracerebral injection. This chain is Conopressin-conophysin, found in Conus geographus (Geography cone).